We begin with the raw amino-acid sequence, 67 residues long: DNA-directed RNA polymerase subunit omega (67 aa).

The protein belongs to the RNA polymerase subunit omega family. As to quaternary structure, the RNAP catalytic core consists of 2 alpha, 1 beta, 1 beta' and 1 omega subunit. When a sigma factor is associated with the core the holoenzyme is formed, which can initiate transcription.

The enzyme catalyses RNA(n) + a ribonucleoside 5'-triphosphate = RNA(n+1) + diphosphate. Its function is as follows. Promotes RNA polymerase assembly. Latches the N- and C-terminal regions of the beta' subunit thereby facilitating its interaction with the beta and alpha subunits. This Polaromonas naphthalenivorans (strain CJ2) protein is DNA-directed RNA polymerase subunit omega.